The primary structure comprises 263 residues: 4-hydroxy-tetrahydrodipicolinate reductase (263 aa).

Residues Gly-8–Met-13, Asp-34, Gly-99–Thr-101, and Ser-125–Tyr-128 each bind NAD(+). The Proton donor/acceptor role is filled by His-157. Residue His-158 coordinates (S)-2,3,4,5-tetrahydrodipicolinate. Lys-161 (proton donor) is an active-site residue. (S)-2,3,4,5-tetrahydrodipicolinate is bound at residue Gly-167–Thr-168.

This sequence belongs to the DapB family.

The protein localises to the cytoplasm. The enzyme catalyses (S)-2,3,4,5-tetrahydrodipicolinate + NAD(+) + H2O = (2S,4S)-4-hydroxy-2,3,4,5-tetrahydrodipicolinate + NADH + H(+). It catalyses the reaction (S)-2,3,4,5-tetrahydrodipicolinate + NADP(+) + H2O = (2S,4S)-4-hydroxy-2,3,4,5-tetrahydrodipicolinate + NADPH + H(+). Its pathway is amino-acid biosynthesis; L-lysine biosynthesis via DAP pathway; (S)-tetrahydrodipicolinate from L-aspartate: step 4/4. In terms of biological role, catalyzes the conversion of 4-hydroxy-tetrahydrodipicolinate (HTPA) to tetrahydrodipicolinate. This chain is 4-hydroxy-tetrahydrodipicolinate reductase, found in Methanosarcina mazei (strain ATCC BAA-159 / DSM 3647 / Goe1 / Go1 / JCM 11833 / OCM 88) (Methanosarcina frisia).